Here is a 199-residue protein sequence, read N- to C-terminus: Melanocortin-2 receptor accessory protein 2B (199 aa).

N-linked (GlcNAc...) asparagine glycosylation occurs at asparagine 6. A helical transmembrane segment spans residues 39 to 59; it reads IVIGFWVGLAVFVIFMFFVLT.

Belongs to the MRAP family. Interacts with mc4r. As to expression, expressed in adult brain.

It is found in the cell membrane. It localises to the endoplasmic reticulum membrane. Functionally, activator of melanocortin receptor 4 (mc4r), a receptor involved in energy homeostasis. Plays a role after larval development in the control of energy homeostasis and body weight regulation by increasing ligand-sensitivity of mc4r and mc4r-mediated generation of cAMP once the zebrafish begins feeding, increasing the capacity for regulated feeding and growth. This is Melanocortin-2 receptor accessory protein 2B (mrap2b) from Danio rerio (Zebrafish).